A 434-amino-acid polypeptide reads, in one-letter code: Iron transporter MagA (434 aa).

Transmembrane regions (helical) follow at residues 6 to 26, 31 to 51, 56 to 76, 86 to 106, 113 to 133, 176 to 196, 269 to 289, 294 to 314, 321 to 341, and 357 to 377; these read PELT…GMMT, PAVV…FGLV, AVAT…GMKL, KTAI…ALLL, SLGL…AVVI, LLPA…LLFW, SVLL…KFIW, TVLT…VTAL, WPSA…SFLL, and KLVV…LFTM.

It belongs to the monovalent cation:proton antiporter 2 (CPA2) transporter (TC 2.A.37) family.

Its subcellular location is the membrane. Iron transporter, which is required for the synthesis of bacterial magnetic particles (BMPs). Probably involved in the transport of iron from the environment into the cytoplasm across the cell membrane, and then from the cytoplasm into the BMP lipid vesicle across the BMP membrane. This chain is Iron transporter MagA (magA), found in Paramagnetospirillum magneticum (strain ATCC 700264 / AMB-1) (Magnetospirillum magneticum).